An 82-amino-acid polypeptide reads, in one-letter code: ATP synthase subunit c, chloroplastic (82 aa).

The next 2 membrane-spanning stretches (helical) occupy residues 3–23 and 57–77; these read PIVA…AAIG and FAFM…LLFA.

It belongs to the ATPase C chain family. As to quaternary structure, F-type ATPases have 2 components, F(1) - the catalytic core - and F(0) - the membrane proton channel. F(1) has five subunits: alpha(3), beta(3), gamma(1), delta(1), epsilon(1). F(0) has four main subunits: a(1), b(1), b'(1) and c(10-14). The alpha and beta chains form an alternating ring which encloses part of the gamma chain. F(1) is attached to F(0) by a central stalk formed by the gamma and epsilon chains, while a peripheral stalk is formed by the delta, b and b' chains.

The protein resides in the plastid. Its subcellular location is the chloroplast thylakoid membrane. Its function is as follows. F(1)F(0) ATP synthase produces ATP from ADP in the presence of a proton or sodium gradient. F-type ATPases consist of two structural domains, F(1) containing the extramembraneous catalytic core and F(0) containing the membrane proton channel, linked together by a central stalk and a peripheral stalk. During catalysis, ATP synthesis in the catalytic domain of F(1) is coupled via a rotary mechanism of the central stalk subunits to proton translocation. Key component of the F(0) channel; it plays a direct role in translocation across the membrane. A homomeric c-ring of between 10-14 subunits forms the central stalk rotor element with the F(1) delta and epsilon subunits. The chain is ATP synthase subunit c, chloroplastic from Tetradesmus obliquus (Green alga).